Reading from the N-terminus, the 188-residue chain is Crossover junction endodeoxyribonuclease RuvC (188 aa).

Active-site residues include Asp-14, Glu-74, and Asp-149. 3 residues coordinate Mg(2+): Asp-14, Glu-74, and Asp-149.

This sequence belongs to the RuvC family. As to quaternary structure, homodimer which binds Holliday junction (HJ) DNA. The HJ becomes 2-fold symmetrical on binding to RuvC with unstacked arms; it has a different conformation from HJ DNA in complex with RuvA. In the full resolvosome a probable DNA-RuvA(4)-RuvB(12)-RuvC(2) complex forms which resolves the HJ. Mg(2+) is required as a cofactor.

It localises to the cytoplasm. It catalyses the reaction Endonucleolytic cleavage at a junction such as a reciprocal single-stranded crossover between two homologous DNA duplexes (Holliday junction).. Functionally, the RuvA-RuvB-RuvC complex processes Holliday junction (HJ) DNA during genetic recombination and DNA repair. Endonuclease that resolves HJ intermediates. Cleaves cruciform DNA by making single-stranded nicks across the HJ at symmetrical positions within the homologous arms, yielding a 5'-phosphate and a 3'-hydroxyl group; requires a central core of homology in the junction. The consensus cleavage sequence is 5'-(A/T)TT(C/G)-3'. Cleavage occurs on the 3'-side of the TT dinucleotide at the point of strand exchange. HJ branch migration catalyzed by RuvA-RuvB allows RuvC to scan DNA until it finds its consensus sequence, where it cleaves and resolves the cruciform DNA. The sequence is that of Crossover junction endodeoxyribonuclease RuvC from Bacteroides fragilis (strain ATCC 25285 / DSM 2151 / CCUG 4856 / JCM 11019 / LMG 10263 / NCTC 9343 / Onslow / VPI 2553 / EN-2).